A 504-amino-acid polypeptide reads, in one-letter code: Maturase K (504 aa).

This sequence belongs to the intron maturase 2 family. MatK subfamily.

It is found in the plastid. Its subcellular location is the chloroplast. In terms of biological role, usually encoded in the trnK tRNA gene intron. Probably assists in splicing its own and other chloroplast group II introns. This chain is Maturase K, found in Adansonia digitata (Baobab tree).